Consider the following 171-residue polypeptide: Crossover junction endodeoxyribonuclease RuvC (171 aa).

Catalysis depends on residues aspartate 7, glutamate 66, and aspartate 138. Aspartate 7, glutamate 66, and aspartate 138 together coordinate Mg(2+).

Belongs to the RuvC family. Homodimer which binds Holliday junction (HJ) DNA. The HJ becomes 2-fold symmetrical on binding to RuvC with unstacked arms; it has a different conformation from HJ DNA in complex with RuvA. In the full resolvosome a probable DNA-RuvA(4)-RuvB(12)-RuvC(2) complex forms which resolves the HJ. The cofactor is Mg(2+).

It is found in the cytoplasm. The enzyme catalyses Endonucleolytic cleavage at a junction such as a reciprocal single-stranded crossover between two homologous DNA duplexes (Holliday junction).. In terms of biological role, the RuvA-RuvB-RuvC complex processes Holliday junction (HJ) DNA during genetic recombination and DNA repair. Endonuclease that resolves HJ intermediates. Cleaves cruciform DNA by making single-stranded nicks across the HJ at symmetrical positions within the homologous arms, yielding a 5'-phosphate and a 3'-hydroxyl group; requires a central core of homology in the junction. The consensus cleavage sequence is 5'-(A/T)TT(C/G)-3'. Cleavage occurs on the 3'-side of the TT dinucleotide at the point of strand exchange. HJ branch migration catalyzed by RuvA-RuvB allows RuvC to scan DNA until it finds its consensus sequence, where it cleaves and resolves the cruciform DNA. The sequence is that of Crossover junction endodeoxyribonuclease RuvC from Francisella tularensis subsp. holarctica (strain FTNF002-00 / FTA).